The sequence spans 220 residues: Urease accessory protein UreF (220 aa).

This sequence belongs to the UreF family. UreD, UreF and UreG form a complex that acts as a GTP-hydrolysis-dependent molecular chaperone, activating the urease apoprotein by helping to assemble the nickel containing metallocenter of UreC. The UreE protein probably delivers the nickel.

It localises to the cytoplasm. Required for maturation of urease via the functional incorporation of the urease nickel metallocenter. This is Urease accessory protein UreF from Bordetella parapertussis (strain 12822 / ATCC BAA-587 / NCTC 13253).